A 256-amino-acid polypeptide reads, in one-letter code: Acetyl-coenzyme A carboxylase carboxyl transferase subunit alpha (256 aa).

The CoA carboxyltransferase C-terminal domain occupies Met1–Gln236.

The protein belongs to the AccA family. As to quaternary structure, acetyl-CoA carboxylase is a heterohexamer composed of biotin carboxyl carrier protein (AccB), biotin carboxylase (AccC) and two subunits each of ACCase subunit alpha (AccA) and ACCase subunit beta (AccD).

It localises to the cytoplasm. It carries out the reaction N(6)-carboxybiotinyl-L-lysyl-[protein] + acetyl-CoA = N(6)-biotinyl-L-lysyl-[protein] + malonyl-CoA. It participates in lipid metabolism; malonyl-CoA biosynthesis; malonyl-CoA from acetyl-CoA: step 1/1. Component of the acetyl coenzyme A carboxylase (ACC) complex. First, biotin carboxylase catalyzes the carboxylation of biotin on its carrier protein (BCCP) and then the CO(2) group is transferred by the carboxyltransferase to acetyl-CoA to form malonyl-CoA. The protein is Acetyl-coenzyme A carboxylase carboxyl transferase subunit alpha of Streptococcus gordonii (strain Challis / ATCC 35105 / BCRC 15272 / CH1 / DL1 / V288).